The sequence spans 583 residues: Long-chain-fatty-acid--AMP ligase FadD26 (583 aa).

The protein belongs to the ATP-dependent AMP-binding enzyme family.

The enzyme catalyses holo-[(phenol)carboxyphthiodiolenone synthase] + a long-chain fatty acid + ATP = a long-chain fatty acyl-[(phenol)carboxyphthiodiolenone synthase] + AMP + diphosphate. The catalysed reaction is eicosanoate + holo-[(phenol)carboxyphthiodiolenone synthase] + ATP = icosanoyl-[(phenol)carboxyphthiodiolenone synthase] + AMP + diphosphate. It catalyses the reaction holo-[(phenol)carboxyphthiodiolenone synthase] + docosanoate + ATP = docosanoyl-[(phenol)carboxyphthiodiolenone synthase] + AMP + diphosphate. Its pathway is lipid metabolism; fatty acid biosynthesis. In terms of biological role, catalyzes the activation of long-chain fatty acids as acyl-adenylates (acyl-AMP), which are then transferred to the multifunctional polyketide synthase PpsA for further chain extension. Catalyzes the adenylation of the long-chain fatty acids eicosanoate (C20) or docosanoate (C22), and potentially the very-long-chain fatty acid lignocerate (C24). Involved in the biosynthesis of phthiocerol dimycocerosate (DIM A) and phthiodiolone dimycocerosate (DIM B). In Mycobacterium tuberculosis (strain CDC 1551 / Oshkosh), this protein is Long-chain-fatty-acid--AMP ligase FadD26 (fadD26).